The following is a 645-amino-acid chain: Serine/threonine-protein kinase Nek11 (645 aa).

Positions 29–287 (YVLQQKLGSG…AIEILKIPYL (259 aa)) constitute a Protein kinase domain. ATP is bound by residues 35-43 (LGSGSFGTV) and lysine 61. Residue aspartate 158 is the Proton acceptor of the active site. At serine 273 the chain carries Phosphoserine; by CHEK1. Residues 346–385 (RLRKLQAADEKARKLKKIVEEKYEENSKRMQELRSRNFQQ) are a coiled coil. The segment at 399-445 (GMEEKEEQPEGRLSCSPQDEDEERWQGREEESDEPTLENLPESQPIP) is disordered.

It belongs to the protein kinase superfamily. NEK Ser/Thr protein kinase family. NIMA subfamily. Interacts with isoform 1 of NEK2. Mn(2+) is required as a cofactor. It depends on Mg(2+) as a cofactor. Post-translationally, phosphorylated by NEK2. Phosphorylation at Ser-273 is important for its activation. As to expression, poorly expressed in cerebellum, trachea, lung, appendix, and uterus.

The protein localises to the nucleus. The protein resides in the nucleolus. The catalysed reaction is L-seryl-[protein] + ATP = O-phospho-L-seryl-[protein] + ADP + H(+). It carries out the reaction L-threonyl-[protein] + ATP = O-phospho-L-threonyl-[protein] + ADP + H(+). Its activity is regulated as follows. Autorepressed by intramolecular binding of the C-terminus which dissociates following phosphorylation by NEK2 isoform 1 in G1/S-arrested cells. NEK2 isoform 2 is largely not present in the nucleolus, and does not appear to phosphorylate NEK11. Activated in response to DNA damage. Inhibited by zinc. Functionally, protein kinase which plays an important role in the G2/M checkpoint response to DNA damage. Controls degradation of CDC25A by directly phosphorylating it on residues whose phosphorylation is required for BTRC-mediated polyubiquitination and degradation. The polypeptide is Serine/threonine-protein kinase Nek11 (Homo sapiens (Human)).